Consider the following 146-residue polypeptide: Calmodulin-like protein 5 (146 aa).

Residue alanine 2 is modified to N-acetylalanine. EF-hand domains lie at 8–43 (EEEA…TGKN), 44–74 (LSEA…TAAK), 78–113 (AGLE…LGQP), and 114–146 (LPQE…LAQE). The Ca(2+) site is built by aspartate 21, aspartate 23, asparagine 25, threonine 27, glutamate 32, aspartate 57, aspartate 59, aspartate 61, glutamate 63, glutamate 68, aspartate 91, aspartate 93, aspartate 95, histidine 97, glutamate 102, aspartate 127, aspartate 129, aspartate 131, arginine 133, and glutamate 138.

Associates with transglutaminase 3. Particularly abundant in the epidermis where its expression is directly related to keratinocyte differentiation. Very low expression in lung.

Functionally, binds calcium. May be involved in terminal differentiation of keratinocytes. This chain is Calmodulin-like protein 5 (CALML5), found in Homo sapiens (Human).